The primary structure comprises 821 residues: Phenylalanine--tRNA ligase beta subunit (821 aa).

Residues 39–149 (SENVKGIVLG…EDIALNHNLG (111 aa)) form the tRNA-binding domain. A B5 domain is found at 414-507 (LKKILIPLRR…RLIGYDMFDL (94 aa)). Residues Asp485, Asp491, Glu494, and Glu495 each contribute to the Mg(2+) site. Positions 727–820 (PTVPKMERDI…IEKKFSTKLR (94 aa)) constitute an FDX-ACB domain.

It belongs to the phenylalanyl-tRNA synthetase beta subunit family. Type 1 subfamily. Tetramer of two alpha and two beta subunits. It depends on Mg(2+) as a cofactor.

It localises to the cytoplasm. The catalysed reaction is tRNA(Phe) + L-phenylalanine + ATP = L-phenylalanyl-tRNA(Phe) + AMP + diphosphate + H(+). This is Phenylalanine--tRNA ligase beta subunit from Prochlorococcus marinus subsp. pastoris (strain CCMP1986 / NIES-2087 / MED4).